Consider the following 73-residue polypeptide: MISTSSILVLVVLLACFMAASAQWGYGGYGRGYGGYGGYGRGMYGGYGRGMYGGYGRGMYGGYGRGMYGGWGK.

Positions 1 to 22 (MISTSSILVLVVLLACFMAASA) are cleaved as a signal peptide. 5 positions are modified to tyrosine amide: tyrosine 29, tyrosine 39, tyrosine 47, tyrosine 55, and tyrosine 63. Tryptophan 71 bears the Tryptophan amide mark.

This sequence belongs to the YARP (YGGW-amide related peptide) family. As to expression, weakly or not expressed in absence of infection. Upon infection by D.coniospora, it is expressed in hypoderm. Also expressed in perivulval cells when D.coniospora spores adhere to this region. Expressed in hypodermis upon physical injury.

Its subcellular location is the secreted. Antimicrobial peptides that have antibacterial activity against the Gram-negative bacteria S.marcescens. Has antifungal activity against D.coniospora. May play a role in response to physical injury and osmotic stress. Through the neuropeptide receptor nlp-29, induces sleep upon activation of the innate immune response to molting and injury to the adult epidermis. The chain is Neuropeptide-like protein 29 from Caenorhabditis elegans.